Consider the following 479-residue polypeptide: MNRNPDQNTFPNITLKIIETYLGRVPSVNEYHMLKLQARNIQKITVFNKDIFVSLVKKNKKRFFSDVDTSASEIKDRILSYFSKQTQTYNIGKLFTIIELQSVLVTTYTDILGVLTIKAPNVISSKISYNVTSMEELARDMLNSMNVAIIDKAKVMGRHNVSSLVKNVNKLMEEYLRRHNKSCICYGSYSLYLINPNIRYGDIDILQTNSRTFLIDLAFLIKFITGNNIILSKIPYLRNYMVIKDENDNHIIDSFNIRQDTMNVVPKIFIDNIYIVDPTFQLLNMIKMFSQIDRLEDLSKDPEKFNARMATMLEYVRYTHGIVFDGKRNNMPMKCIIDENNRIVTVTTKDYFSFKKCLVYLDENVLSSDILDLNADTSCDFESVTNSVYLIHDNIMYTYFSNTILLSDKGKVHEISARGLCAHILLYQMLTSGEYKQCLSDLLNSMMNRDKIPIYSHTERDKKPGRHGFINIEKDIIVF.

Active-site residues include D202 and D204. Residues D202, D204, and D253 each contribute to the Ca(2+) site.

This sequence belongs to the poxviridae poly(A) polymerase catalytic subunit family. Heterodimer of a large (catalytic) subunit and a small (regulatory) subunit.

The enzyme catalyses RNA(n) + ATP = RNA(n)-3'-adenine ribonucleotide + diphosphate. Its function is as follows. Polymerase that creates the 3'-poly(A) tail of mRNA's. This chain is Poly(A) polymerase catalytic subunit (OPG063), found in Homo sapiens (Human).